The sequence spans 621 residues: UvrABC system protein C (621 aa).

In terms of domain architecture, GIY-YIG spans 13–92; it reads EKPGVYLMKN…IKKYRPRYNI (80 aa). The UVR domain occupies 204-239; it reads NEVINDLKIKMEKASSELKFEEAASFRDKLLAVEKI.

The protein belongs to the UvrC family. As to quaternary structure, interacts with UvrB in an incision complex.

The protein resides in the cytoplasm. Functionally, the UvrABC repair system catalyzes the recognition and processing of DNA lesions. UvrC both incises the 5' and 3' sides of the lesion. The N-terminal half is responsible for the 3' incision and the C-terminal half is responsible for the 5' incision. The polypeptide is UvrABC system protein C (Clostridium novyi (strain NT)).